A 67-amino-acid chain; its full sequence is Large ribosomal subunit protein bL35 (67 aa).

Belongs to the bacterial ribosomal protein bL35 family.

In Bartonella tribocorum (strain CIP 105476 / IBS 506), this protein is Large ribosomal subunit protein bL35.